A 275-amino-acid polypeptide reads, in one-letter code: tRNA pseudouridine synthase A (275 aa).

The Nucleophile role is filled by Asp-56. Tyr-114 provides a ligand contact to substrate.

It belongs to the tRNA pseudouridine synthase TruA family. In terms of assembly, homodimer.

It carries out the reaction uridine(38/39/40) in tRNA = pseudouridine(38/39/40) in tRNA. Formation of pseudouridine at positions 38, 39 and 40 in the anticodon stem and loop of transfer RNAs. The chain is tRNA pseudouridine synthase A from Polynucleobacter asymbioticus (strain DSM 18221 / CIP 109841 / QLW-P1DMWA-1) (Polynucleobacter necessarius subsp. asymbioticus).